Consider the following 275-residue polypeptide: Nuclear egress protein 2 (275 aa).

Residues 1–251 are Perinuclear space-facing; it reads MAGLGKPYTG…GLKHLRIGPP (251 aa). Residues 137-181 form an interaction with NEC1 region; it reads KGRLGLDARPMMASMWISCFVRMPRVQLAFRFMGPEDAGRTRRIL. The chain crosses the membrane as a helical span at residues 252–272; that stretch reads ALVLAAGLVLGAAIWWVVGAG. At 273–275 the chain is on the nuclear side; it reads ARL.

This sequence belongs to the herpesviridae NEC2 protein family. As to quaternary structure, forms a heterohexameric complex with NEC1. Interacts with glycoprotein D; this interaction recruits glycoprotein D and glycoprotein M to the inner nuclear membrane. Post-translationally, phosphorylated by viral kinase US3.

The protein localises to the host nucleus inner membrane. Plays an essential role in virion nuclear egress, the first step of virion release from infected cell. Within the host nucleus, NEC1 interacts with the newly formed capsid through the vertexes and directs it to the inner nuclear membrane by associating with NEC2. Induces the budding of the capsid at the inner nuclear membrane as well as its envelopment into the perinuclear space. There, the NEC1/NEC2 complex promotes the fusion of the enveloped capsid with the outer nuclear membrane and the subsequent release of the viral capsid into the cytoplasm where it will reach the secondary budding sites in the host Golgi or trans-Golgi network. The chain is Nuclear egress protein 2 from Homo sapiens (Human).